A 199-amino-acid chain; its full sequence is Alpha-D-glucose 1-phosphate phosphatase YihX (199 aa).

D6 serves as the catalytic Nucleophile. D6 serves as a coordination point for Mg(2+). Residues 6–8 (DLG), 107–108 (SN), K141, and D166 each bind substrate. D166 serves as a coordination point for Mg(2+).

Belongs to the HAD-like hydrolase superfamily. YihX family. It depends on Mg(2+) as a cofactor. Mn(2+) is required as a cofactor. Requires Co(2+) as cofactor. The cofactor is Zn(2+).

It catalyses the reaction alpha-D-glucose 1-phosphate + H2O = D-glucose + phosphate. Functionally, catalyzes the dephosphorylation of alpha-D-glucose 1-phosphate (Glc1P) and, to a lesser extent, of other sugar phosphates. Has no activity with the beta form of Glc1P. In addition, YihX has significant phosphatase activity against pyridoxal phosphate (PLP) and low beta-phosphoglucomutase activity. The polypeptide is Alpha-D-glucose 1-phosphate phosphatase YihX (yihX) (Escherichia coli (strain K12)).